Consider the following 397-residue polypeptide: Odorant receptor 85a (397 aa).

Topologically, residues 1 to 46 (MIFKYIQEPVLGSLFRSRDSLIYLNRSIDQMGWRLPPRTKPYWWLY) are cytoplasmic. The helical transmembrane segment at 47–67 (YIWTLVVIVLVFIFIPYGLIM) threads the bilayer. Topologically, residues 68-83 (TGIKEFKNFTTTDLFT) are extracellular. Residue N75 is glycosylated (N-linked (GlcNAc...) asparagine). The helical transmembrane segment at 84 to 104 (YVQVPVNTNASIMKGIIVLFM) threads the bilayer. The Cytoplasmic segment spans residues 105–142 (RRRFSRAQKMMDAMDIRCTKMEEKVQVHRAAALCNRVV). A helical transmembrane segment spans residues 143-163 (VIYHCIYFGYLSMALTGALVI). The Extracellular portion of the chain corresponds to 164 to 192 (GKTPFCLYNPLVNPDDHFYLATAIESVTM). The chain crosses the membrane as a helical span at residues 193–213 (AGIILANLILDVYPIIYVVVL). At 214–262 (RIHMELLSERIKTLRTDVEKGDDQHYAELVECVKDHKLIVEYGNTLRPM) the chain is on the cytoplasmic side. A helical transmembrane segment spans residues 263–283 (ISATMFIQLLSVGLLLGLAAV). Residues 284-294 (SMQFYNTVMER) are Extracellular-facing. Residues 295-315 (VVSGVYTIAILSQTFPFCYVC) form a helical membrane-spanning segment. The Cytoplasmic segment spans residues 316 to 347 (EQLSSDCESLTNTLFHSKWIGAERRYRTTMLY). Residues 348 to 368 (FIHNVQQSILFTAGGIFPICL) form a helical membrane-spanning segment. Residues 369–397 (NTNIKMAKFAFSVVTIVNEMDLAEKLRRE) are Extracellular-facing.

Belongs to the insect chemoreceptor superfamily. Heteromeric odorant receptor channel (TC 1.A.69) family. Or2a subfamily. Interacts with Orco. Complexes exist early in the endomembrane system in olfactory sensory neurons (OSNs), coupling these complexes to the conserved ciliary trafficking pathway. In terms of tissue distribution, expressed in olfactory sensory neurons in the antenna.

The protein resides in the cell membrane. Its function is as follows. Odorant receptor which mediates acceptance or avoidance behavior, depending on its substrates. The odorant receptor repertoire encodes a large collection of odor stimuli that vary widely in identity, intensity, and duration. May form a complex with Orco to form odorant-sensing units, providing sensitive and prolonged odorant signaling and calcium permeability. The chain is Odorant receptor 85a (Or85a) from Drosophila melanogaster (Fruit fly).